The sequence spans 381 residues: 8-amino-7-oxononanoate synthase (381 aa).

Substrate is bound at residue Arg27. A pyridoxal 5'-phosphate-binding site is contributed by 105–106 (GY). His130 contacts substrate. Pyridoxal 5'-phosphate-binding positions include Ser176, 201–204 (DEAH), and 232–235 (TLSK). An N6-(pyridoxal phosphate)lysine modification is found at Lys235. Residue Thr345 participates in substrate binding.

Belongs to the class-II pyridoxal-phosphate-dependent aminotransferase family. BioF subfamily. Homodimer. The cofactor is pyridoxal 5'-phosphate.

The catalysed reaction is 6-carboxyhexanoyl-[ACP] + L-alanine + H(+) = (8S)-8-amino-7-oxononanoate + holo-[ACP] + CO2. It participates in cofactor biosynthesis; biotin biosynthesis. Its function is as follows. Catalyzes the decarboxylative condensation of pimeloyl-[acyl-carrier protein] and L-alanine to produce 8-amino-7-oxononanoate (AON), [acyl-carrier protein], and carbon dioxide. In Mycobacterium avium (strain 104), this protein is 8-amino-7-oxononanoate synthase.